The chain runs to 346 residues: NADH-ubiquinone oxidoreductase chain 2 (346 aa).

The next 11 membrane-spanning stretches (helical) occupy residues 1-21 (MNPH…TITI), 25-45 (HWVL…PLIS), 60-80 (FLTQ…NAWA), 95-115 (CLLL…HFWF), 124-144 (LMTA…LLLM), 149-169 (LNPA…GWMG), 178-195 (ILAF…IILV), 200-219 (LALL…FMAL), 242-262 (ATLM…GFMP), 274-294 (EMTP…FFYL), and 326-346 (AILA…HAIV).

Belongs to the complex I subunit 2 family.

The protein resides in the mitochondrion inner membrane. The catalysed reaction is a ubiquinone + NADH + 5 H(+)(in) = a ubiquinol + NAD(+) + 4 H(+)(out). In terms of biological role, core subunit of the mitochondrial membrane respiratory chain NADH dehydrogenase (Complex I) that is believed to belong to the minimal assembly required for catalysis. Complex I functions in the transfer of electrons from NADH to the respiratory chain. The immediate electron acceptor for the enzyme is believed to be ubiquinone. This Anas acuta (Northern pintail) protein is NADH-ubiquinone oxidoreductase chain 2 (MT-ND2).